Here is a 584-residue protein sequence, read N- to C-terminus: POTE ankyrin domain family member D (584 aa).

6 ANK repeats span residues 172-201 (EKRT…QLNV), 205-234 (KKRT…DRNI), 238-267 (YGNT…DIES), 271-300 (CGLT…NLNV), 304-333 (YGRT…DVSS), and 337-366 (SGQT…KQML). Residues 369–502 (SSENSNPEQD…ILTNKQKQIE (134 aa)) are disordered. Basic and acidic residues-rich tracts occupy residues 377 to 392 (QDLK…RLKV), 401 to 412 (MSQEPEINKDCD), and 466 to 481 (EEYH…KQLS). Over residues 482–498 (EEQNTGISQDEILTNKQ) the composition is skewed to polar residues. Positions 494–583 (LTNKQKQIEV…LNEEALTKTN (90 aa)) form a coiled coil.

The protein belongs to the POTE family. As to expression, expressed in prostate, ovary, testis, placenta and prostate cancer cell lines. Localizes to basal and terminal prostate epithelial cells.

It localises to the cell membrane. The sequence is that of POTE ankyrin domain family member D (POTED) from Homo sapiens (Human).